A 144-amino-acid chain; its full sequence is Large ribosomal subunit protein uL13 (144 aa).

It belongs to the universal ribosomal protein uL13 family. Part of the 50S ribosomal subunit.

Functionally, this protein is one of the early assembly proteins of the 50S ribosomal subunit, although it is not seen to bind rRNA by itself. It is important during the early stages of 50S assembly. The sequence is that of Large ribosomal subunit protein uL13 from Clostridium acetobutylicum (strain ATCC 824 / DSM 792 / JCM 1419 / IAM 19013 / LMG 5710 / NBRC 13948 / NRRL B-527 / VKM B-1787 / 2291 / W).